The chain runs to 467 residues: 2-succinylbenzoate--CoA ligase (467 aa).

Belongs to the ATP-dependent AMP-binding enzyme family. MenE subfamily.

It catalyses the reaction 2-succinylbenzoate + ATP + CoA = 2-succinylbenzoyl-CoA + AMP + diphosphate. It participates in quinol/quinone metabolism; 1,4-dihydroxy-2-naphthoate biosynthesis; 1,4-dihydroxy-2-naphthoate from chorismate: step 5/7. It functions in the pathway quinol/quinone metabolism; menaquinone biosynthesis. Its function is as follows. Converts 2-succinylbenzoate (OSB) to 2-succinylbenzoyl-CoA (OSB-CoA). The chain is 2-succinylbenzoate--CoA ligase from Listeria monocytogenes serovar 1/2a (strain ATCC BAA-679 / EGD-e).